Consider the following 679-residue polypeptide: Stress-70 protein, mitochondrial (679 aa).

The N-terminal 46 residues, 1 to 46 (MISASRAVAARLVGAAASRGPTAARHQDGWNGLSHEAFRIVSRRDY), are a transit peptide targeting the mitochondrion. Positions 1 to 432 (MISASRAVAA…IQGGVLAGDV (432 aa)) are interaction with NFS1. Positions 63 and 64 each coordinate ADP. Positions 63 to 431 (TNSCVAVMEG…AIQGGVLAGD (369 aa)) are nucleotide-binding domain (NBD). Residue Lys76 is modified to N6-acetyllysine. Thr87 is subject to Phosphothreonine. N6-acetyllysine; alternate occurs at positions 135 and 138. Residues Lys135 and Lys138 each carry the N6-succinyllysine; alternate modification. An N6-acetyllysine modification is found at Lys143. Residue Lys206 is modified to N6-acetyllysine; alternate. Lys206 is modified (N6-succinyllysine; alternate). An N6-malonyllysine; alternate modification is found at Lys206. N6-acetyllysine occurs at positions 234 and 288. Lys300 is modified (N6-acetyllysine; alternate). The residue at position 300 (Lys300) is an N6-succinyllysine; alternate. The ADP site is built by Glu313, Lys316, and Ser320. Lys368 is modified (N6-succinyllysine). ADP is bound by residues Gly388 and Arg391. Lys394 bears the N6-succinyllysine mark. A Phosphoserine modification is found at Ser408. An interdomain linker region spans residues 432–441 (VTDVLLLDVT). Residues 432–679 (VTDVLLLDVT…QKEDQKEEKQ (248 aa)) are interaction with FXN and ISCU. A substrate-binding domain (SBD) region spans residues 442–679 (PLSLGIETLG…QKEDQKEEKQ (238 aa)). Arg513 bears the Omega-N-methylarginine mark. N6-acetyllysine; alternate is present on residues Lys567 and Lys600. Lys567 and Lys600 each carry N6-succinyllysine; alternate. Lys610 carries the post-translational modification N6-succinyllysine. Lys612 carries the post-translational modification N6-acetyllysine. An N6-acetyllysine; alternate modification is found at Lys646. Lys646 is modified (N6-succinyllysine; alternate). The disordered stretch occupies residues 656–679 (ASEREGSGSSGTGEQKEDQKEEKQ). A compositionally biased stretch (basic and acidic residues) spans 669-679 (EQKEDQKEEKQ).

The protein belongs to the heat shock protein 70 family. Interacts strongly with the intermediate form of FXN and weakly with its mature form. Interacts with HSCB. Associates with the mitochondrial contact site and cristae organizing system (MICOS) complex, composed of at least MICOS10/MIC10, CHCHD3/MIC19, CHCHD6/MIC25, APOOL/MIC27, IMMT/MIC60, APOO/MIC23/MIC26 and QIL1/MIC13. This complex was also known under the names MINOS or MitOS complex. The MICOS complex associates with mitochondrial outer membrane proteins SAMM50, MTX1, MTX2 and DNAJC11, mitochondrial inner membrane protein TMEM11 and with HSPA9. Interacts with DNLZ, the interaction is required to prevent self-aggregation. Interacts with TESPA1. Interacts with PDPN. Interacts with NFU1, NFS1 and ISCU. Interacts with TP53; the interaction promotes TP53 degradation. Interacts (via SBD domain) with UBXN2A; the interaction with UBXN2A inhibits HSPA9/MOT-2 interaction with and degradation of TP53, thereby promotes TP53 translocation to the nucleus. Interacts with ITPR1 AND VDAC1; this interaction couples ITPR1 to VDAC1. Component of the TIM23 mitochondrial inner membrane pre-sequence translocase complex.

The protein resides in the mitochondrion. The protein localises to the nucleus. Its subcellular location is the nucleolus. It localises to the cytoplasm. It is found in the mitochondrion matrix. The enzyme catalyses ATP + H2O = ADP + phosphate + H(+). Its activity is regulated as follows. The chaperone activity is regulated by ATP-induced allosteric coupling of the nucleotide-binding (NBD) and substrate-binding (SBD) domains. ATP binding in the nucleotide-binding pocket (NBP) leads to a conformational change in the NBD, which is transferred through the interdomain linker (IDL) to the substrate-binding domain (SBD). This elicits a reduced substrate affinity and a faster substrate exchange rate. Upon hydrolysis of ATP to ADP, the protein undergoes a conformational change that increases its affinity for substrate proteins. It cycles through repeated phases of ATP hydrolysis and nucleotide exchange, facilitating repeated cycles of substrate binding and release. Functions in collaboration with co-chaperones. Functions with the co-chaperone, DNLZ, to maintain solubility and regulate ATP hydrolysis. Nucleotide exchange factors, GRPEL1 and GRPEL2, accelerate nucleotide exchange. Mitochondrial chaperone that plays a key role in mitochondrial protein import, folding, and assembly. Plays an essential role in the protein quality control system, the correct folding of proteins, the re-folding of misfolded proteins, and the targeting of proteins for subsequent degradation. These processes are achieved through cycles of ATP binding, ATP hydrolysis, and ADP release, mediated by co-chaperones. In mitochondria, it associates with the TIM (translocase of the inner membrane) protein complex to assist in the import and folding of mitochondrial proteins. Plays an important role in mitochondrial iron-sulfur cluster (ISC) biogenesis, interacts with and stabilizes ISC cluster assembly proteins FXN, NFU1, NFS1 and ISCU. Regulates erythropoiesis via stabilization of ISC assembly. Regulates mitochondrial calcium-dependent apoptosis by coupling two calcium channels, ITPR1 and VDAC1, at the mitochondria-associated endoplasmic reticulum (ER) membrane to facilitate calcium transport from the ER lumen to the mitochondria intermembrane space, providing calcium for the downstream calcium channel MCU, which releases it into the mitochondrial matrix. Although primarily located in the mitochondria, it is also found in other cellular compartments. In the cytosol, it associates with proteins involved in signaling, apoptosis, or senescence. It may play a role in cell cycle regulation via its interaction with and promotion of degradation of TP53. May play a role in the control of cell proliferation and cellular aging. Protects against reactive oxygen species (ROS). Extracellular HSPA9 plays a cytoprotective role by preventing cell lysis following immune attack by the membrane attack complex by disrupting formation of the complex. The sequence is that of Stress-70 protein, mitochondrial from Pongo abelii (Sumatran orangutan).